The chain runs to 274 residues: Acyl-coenzyme A diphosphatase YFT2 (274 aa).

Residues 1–11 are Cytoplasmic-facing; that stretch reads MIRQLNYWSRK. The helical transmembrane segment at 12–32 threads the bilayer; the sequence is AYLIYPFQVFVGALLSIVVSS. The Lumenal segment spans residues 33–60; it reads ETLNHQKETCALLKSSNIFNVIFAYKAN. Residues 61–81 traverse the membrane as a helical segment; that stretch reads QLWPFLFFSLAFLQIYFHYLA. The Cytoplasmic portion of the chain corresponds to 82-124; it reads RMDILPLPISSTETSSSYLTYTNHWPLLKNRIISIMITQYACK. A helical membrane pass occupies residues 125–145; it reads FVLKYLLLFLNFQFIDHVFIW. At 146-170 the chain is on the lumenal side; that stretch reads TGGECSSGSKTTSAEKCRLENGKWD. A helical transmembrane segment spans residues 171–191; sequence GGFDISGHFCFLVSISMILWM. The active site involves H178. Over 192–215 the chain is Cytoplasmic; the sequence is ELHLFSRFVQAEDMFWVVNKWVRA. The helical transmembrane segment at 216–236 threads the bilayer; sequence CLAIVCAVLVIWICILWVTAI. At 237–247 the chain is on the lumenal side; the sequence is YYHTILEKVLG. H239 is a catalytic residue. A helical transmembrane segment spans residues 248-268; sequence CLMGFICPVFIYHILPKIGIL. The Cytoplasmic segment spans residues 269–274; the sequence is HNYLYL.

The protein belongs to the FIT family. Yeast FIT2A/YFT2 subfamily.

It is found in the endoplasmic reticulum membrane. Its subcellular location is the vacuole. It carries out the reaction an acyl-CoA + H2O = an acyl-4'-phosphopantetheine + adenosine 3',5'-bisphosphate + 2 H(+). It catalyses the reaction (9Z)-octadecenoyl-CoA + H2O = S-(9Z-octadecenoyl)-4'-phosphopantetheine + adenosine 3',5'-bisphosphate + 2 H(+). The catalysed reaction is (5Z,8Z,11Z,14Z)-eicosatetraenoyl-CoA + H2O = S-(5Z,8Z,11Z,14Z-eicosatetraenoyl)-4'-phosphopantetheine + adenosine 3',5'-bisphosphate + 2 H(+). The enzyme catalyses hexadecanoyl-CoA + H2O = S-hexadecanoyl-4'-phosphopantetheine + adenosine 3',5'-bisphosphate + 2 H(+). Its function is as follows. Fatty acyl-coenzyme A (CoA) diphosphatase that hydrolyzes fatty acyl-CoA to yield acyl-4'-phosphopantetheine and adenosine 3',5'-bisphosphate. Preferentially hydrolyzes unsaturated long-chain acyl-CoA substrates in the endoplasmic reticulum (ER) lumen. This catalytic activity is required for maintaining ER structure and for lipid droplets (LDs) biogenesis, which are lipid storage organelles involved in maintaining lipid and energy homeostasis. May directly bind to diacylglycerol (DAGs) and triacylglycerol, which is also important for LD biogenesis. May support directional budding of nacent LDs from the ER into the cytosol by reducing DAG levels at sites of LD formation. May play a role in the regulation of cell morphology and cytoskeletal organization. Involved in phospholipid biosynthesis. In Saccharomyces cerevisiae (strain ATCC 204508 / S288c) (Baker's yeast), this protein is Acyl-coenzyme A diphosphatase YFT2.